Here is a 150-residue protein sequence, read N- to C-terminus: 3-dehydroquinate dehydratase (150 aa).

The active-site Proton acceptor is Y26. Positions 77, 83, and 90 each coordinate substrate. H103 acts as the Proton donor in catalysis. Substrate contacts are provided by residues 104 to 105 (LS) and R114.

It belongs to the type-II 3-dehydroquinase family. As to quaternary structure, homododecamer.

The catalysed reaction is 3-dehydroquinate = 3-dehydroshikimate + H2O. It participates in metabolic intermediate biosynthesis; chorismate biosynthesis; chorismate from D-erythrose 4-phosphate and phosphoenolpyruvate: step 3/7. Catalyzes a trans-dehydration via an enolate intermediate. This Citrobacter koseri (strain ATCC BAA-895 / CDC 4225-83 / SGSC4696) protein is 3-dehydroquinate dehydratase.